The primary structure comprises 749 residues: 1,4-alpha-glucan branching enzyme GlgB (749 aa).

D415 serves as the catalytic Nucleophile. E468 (proton donor) is an active-site residue.

This sequence belongs to the glycosyl hydrolase 13 family. GlgB subfamily. Monomer.

The catalysed reaction is Transfers a segment of a (1-&gt;4)-alpha-D-glucan chain to a primary hydroxy group in a similar glucan chain.. The protein operates within glycan biosynthesis; glycogen biosynthesis. Functionally, catalyzes the formation of the alpha-1,6-glucosidic linkages in glycogen by scission of a 1,4-alpha-linked oligosaccharide from growing alpha-1,4-glucan chains and the subsequent attachment of the oligosaccharide to the alpha-1,6 position. The polypeptide is 1,4-alpha-glucan branching enzyme GlgB (Nitrosococcus oceani (strain ATCC 19707 / BCRC 17464 / JCM 30415 / NCIMB 11848 / C-107)).